Consider the following 446-residue polypeptide: Minor teichoic acid biosynthesis protein GgaA (446 aa).

It belongs to the glycosyltransferase 2 family.

It participates in cell wall biogenesis; poly(glucopyranosyl N-acetylgalactosamine 1-phosphate) teichoic acid biosynthesis. In terms of biological role, involved in the biosynthesis of galactosamine-containing minor teichoic acid, a non-essential cell wall polymer in B.subtilis 168. The chain is Minor teichoic acid biosynthesis protein GgaA (ggaA) from Bacillus subtilis (strain 168).